A 119-amino-acid polypeptide reads, in one-letter code: Putative mating-type protein A2 (119 aa).

Residues 38-100 (KPYRGHRFTK…NRRRKEKTIT (63 aa)) constitute a DNA-binding region (homeobox; TALE-type).

Belongs to the TALE/M-ATYP homeobox family.

The protein localises to the nucleus. Probably not a functional protein. Cells lacking A2 show no obvious alterations in mating, sporulation and cell growth. The polypeptide is Putative mating-type protein A2 (MATA2) (Saccharomyces cerevisiae (Baker's yeast)).